Here is a 398-residue protein sequence, read N- to C-terminus: Homeobox protein knotted-1-like 1 (398 aa).

Disordered stretches follow at residues 20–61 (SPIS…HHHQ), 78–102 (NCFR…ASSS), and 241–273 (LNNP…EIDP). Low complexity predominate over residues 23–56 (SSSNKNDNTSDTNNNNNNNNSSNYGPGYNNTNNN). A compositionally biased stretch (polar residues) spans 87 to 102 (PNNNNNPSVKSEASSS). In terms of domain architecture, ELK spans 279-299 (ELKNHLLKKYSGYLSSLKQEL). Residues 300–363 (SKKKKKGKLP…NQRKRHWKPS (64 aa)) constitute a DNA-binding region (homeobox; TALE-type).

Belongs to the TALE/KNOX homeobox family. In terms of assembly, may form heterodimeric complex with the TALE/BELL proteins BEL1, BLH2, BLH8/PNF and BLH9/PNY. Interacts with OFP1, OFP2, OFP4, OFP6 and OFP12. Interacts with CCT7 and CCT8. Interacts with KNATM-B. Binds to AGO10/PNH. Interacts with BZIP30. In terms of tissue distribution, expressed in the vegetative meristem. Present in the base of flower primordia.

The protein localises to the nucleus. May play a role in meristem function, and may be involved in maintaining cells in an undifferentiated, meristematic state, and its expression disappears at the same time the shoot apex undergoes the transition from vegetative to reproductive development. Positive regulator of LATERAL ORGAN BOUNDARIES (LOB). Probably binds to the DNA sequence 5'-TGAC-3'. Able to traffic from the L1 to the L2/L3 layers of the meristem, presumably through plasmodesmata. The chain is Homeobox protein knotted-1-like 1 (KNAT1) from Arabidopsis thaliana (Mouse-ear cress).